Here is a 1238-residue protein sequence, read N- to C-terminus: Multifunctional 2-oxoglutarate metabolism enzyme (1238 aa).

Residues 1–41 (MANISSPFGQNEWLVEEMYRKFRDDPSSVDPSWHEFLVDYN) form a 2-oxoglutarate dehydrogenase E1, N-terminal part region. Positions 42-97 (PESTAEPVLTDPTSTDKQPSATPQAKPAAAADPVASRAKPATTPTVANGTAAGSAA) are linker. Residues 44-108 (STAEPVLTDP…PAKTTTTPPI (65 aa)) form a disordered region. Residues 59–107 (QPSATPQAKPAAAADPVASRAKPATTPTVANGTAAGSAAAPAKTTTTPP) show a composition bias toward low complexity. The succinyltransferase E2 stretch occupies residues 98-346 (APAKTTTTPP…LRTIHEMVLS (249 aa)). H325 (proton acceptor; for succinyltransferase activity) is an active-site residue. A 2-oxoglutarate dehydrogenase E1, C-terminal part region spans residues 347 to 1238 (DSFWDEIFRE…QQEILDTAFG (892 aa)). R551 is a binding site for thiamine diphosphate. 2-oxoglutarate-binding residues include H590 and S615. Thiamine diphosphate contacts are provided by S615, L617, D657, A658, A659, and N690. D657 serves as a coordination point for Mg(2+). Mg(2+) contacts are provided by N690 and I692. The stretch at 795–825 (DISLKEAEDALRDYQGQLERVFNEVRDLEKH) forms a coiled coil. Residue H1032 participates in 2-oxoglutarate binding. Residues T1050, R1066, K1101, S1104, Q1154, R1161, and R1162 each coordinate acetyl-CoA.

This sequence belongs to the 2-oxoacid dehydrogenase family. Kgd subfamily. As to quaternary structure, homodimer. The 2-oxoglutarate dehydrogenase (ODH) complex contains multiple copies of three enzymatic components: 2-oxoglutarate dehydrogenase (E1), dihydrolipoamide succinyltransferase (E2) and lipoamide dehydrogenase (E3). Mg(2+) serves as cofactor. Thiamine diphosphate is required as a cofactor.

The catalysed reaction is glyoxylate + 2-oxoglutarate + H(+) = 2-hydroxy-3-oxoadipate + CO2. The enzyme catalyses 2-oxoglutarate + H(+) = succinate semialdehyde + CO2. It catalyses the reaction N(6)-[(R)-lipoyl]-L-lysyl-[protein] + 2-oxoglutarate + H(+) = N(6)-[(R)-S(8)-succinyldihydrolipoyl]-L-lysyl-[protein] + CO2. It carries out the reaction N(6)-[(R)-dihydrolipoyl]-L-lysyl-[protein] + succinyl-CoA = N(6)-[(R)-S(8)-succinyldihydrolipoyl]-L-lysyl-[protein] + CoA. Its pathway is carbohydrate metabolism; tricarboxylic acid cycle; succinate from 2-oxoglutarate (transferase route): step 1/2. It participates in carbohydrate metabolism; tricarboxylic acid cycle; succinyl-CoA from 2-oxoglutarate (dehydrogenase route): step 1/1. With respect to regulation, alpha-ketoglutarate dehydrogenase and decarboxylase activities are inhibited by unphosphorylated GarA, and allosterically activated by acetyl-CoA, the main substrate of the TCA cycle. In terms of biological role, shows three enzymatic activities that share a first common step, the attack of thiamine-PP on 2-oxoglutarate (alpha-ketoglutarate, KG), leading to the formation of an enamine-thiamine-PP intermediate upon decarboxylation. Thus, displays KGD activity, catalyzing the decarboxylation from five-carbon 2-oxoglutarate to four-carbon succinate semialdehyde (SSA). Also catalyzes C-C bond formation between the activated aldehyde formed after decarboxylation of alpha-ketoglutarate and the carbonyl of glyoxylate (GLX), to yield 2-hydroxy-3-oxoadipate (HOA), which spontaneously decarboxylates to form 5-hydroxylevulinate (HLA). And is also a component of the 2-oxoglutarate dehydrogenase (ODH) complex, that catalyzes the overall conversion of 2-oxoglutarate to succinyl-CoA and CO(2). The KG decarboxylase and KG dehydrogenase reactions provide two alternative, tightly regulated, pathways connecting the oxidative and reductive branches of the TCA cycle. The sequence is that of Multifunctional 2-oxoglutarate metabolism enzyme (kgd) from Mycobacterium leprae (strain TN).